The primary structure comprises 301 residues: Ankyrin repeat domain-containing protein 29 (301 aa).

ANK repeat units follow at residues Pro-11–Cys-41, His-45–Leu-74, Ser-78–Phe-107, Asp-111–Asp-140, Asp-144–Gln-173, Asp-177–Ala-206, Asp-210–Ile-239, and Asn-242–Leu-271.

The protein is Ankyrin repeat domain-containing protein 29 (ANKRD29) of Homo sapiens (Human).